We begin with the raw amino-acid sequence, 175 residues long: Alpha-crystallin B chain (175 aa).

At M1 the chain carries N-acetylmethionine. S19 carries the phosphoserine modification. The O-linked (GlcNAc) serine glycan is linked to S41. S45 and S59 each carry phosphoserine. Residues 56–164 (RAPSWIDTGL…PERTIPITRE (109 aa)) form the sHSP domain. H83 provides a ligand contact to Zn(2+). K90 carries an N-linked (Glc) (glycation) lysine glycan. K92 is modified (N6-acetyllysine; alternate). A glycan (N-linked (Glc) (glycation) lysine; alternate) is linked at K92. Residues H104, E106, H111, and H119 each coordinate Zn(2+). The tract at residues 144 to 175 (TVNGPRKQASGPERTIPITREEKPAVTAAPKK) is disordered. K166 bears the N6-acetyllysine mark. A glycan (O-linked (GlcNAc) threonine) is linked at T170.

This sequence belongs to the small heat shock protein (HSP20) family. As to quaternary structure, heteromer composed of three CRYAA and one CRYAB subunits. Aggregates with homologous proteins, including the small heat shock protein HSPB1, to form large heteromeric complexes. Inter-subunit bridging via zinc ions enhances stability, which is crucial as there is no protein turn over in the lens. Interacts with HSPBAP1 and TTN/titin. Interacts with TMEM109; in the cellular response to DNA damage. Interacts with DES; binds rapidly during early stages of DES filament assembly and a reduced binding seen in the later stages. Interacts with TMED10; the interaction mediates the translocation from the cytoplasm into the ERGIC (endoplasmic reticulum-Golgi intermediate compartment) and thereby secretion. Interacts with ATP6V1A and with MTOR, forming a ternary complex. Post-translationally, it is not known whether either Lys-90, or Lys-92, or both are glycated. In terms of tissue distribution, lens as well as other tissues.

Its subcellular location is the cytoplasm. The protein localises to the nucleus. The protein resides in the secreted. It localises to the lysosome. Its function is as follows. May contribute to the transparency and refractive index of the lens. Has chaperone-like activity, preventing aggregation of various proteins under a wide range of stress conditions. In lens epithelial cells, stabilizes the ATP6V1A protein, preventing its degradation by the proteasome. This chain is Alpha-crystallin B chain (CRYAB), found in Bos taurus (Bovine).